Reading from the N-terminus, the 132-residue chain is Large ribosomal subunit protein uL14 (132 aa).

Belongs to the universal ribosomal protein uL14 family. Part of the 50S ribosomal subunit. Forms a cluster with proteins L3 and L24e, part of which may contact the 16S rRNA in 2 intersubunit bridges.

Functionally, binds to 23S rRNA. Forms part of two intersubunit bridges in the 70S ribosome. This Natronomonas pharaonis (strain ATCC 35678 / DSM 2160 / CIP 103997 / JCM 8858 / NBRC 14720 / NCIMB 2260 / Gabara) (Halobacterium pharaonis) protein is Large ribosomal subunit protein uL14.